A 468-amino-acid chain; its full sequence is MAEIWFLVVPILILCLLLVRVIVSKKKKNSRGKLPPGSMGWPYLGETLQLYSQNPNVFFTSKQKRYGEIFKTRILGYPCVMLASPEAARFVLVTHAHMFKPTYPRSKEKLIGPSALFFHQGDYHSHIRKLVQSSFYPETIRKLIPDIEHIALSSLQSWANMPIVSTYQEMKKFAFDVGILAIFGHLESSYKEILKHNYNIVDKGYNSFPMSLPGTSYHKALMARKQLKTIVSEIICERREKRALQTDFLGHLLNFKNEKGRVLTQEQIADNIIGVLFAAQDTTASCLTWILKYLHDDQKLLEAVKAEQKAIYEENSREKKPLTWRQTRNMPLTHKVIVESLRMASIISFTFREAVVDVEYKGYLIPKGWKVMPLFRNIHHNPKYFSNPEVFDPSRFEVNPKPNTFMPFGSGVHACPGNELAKLQILIFLHHLVSNFRWEVKGGEKGIQYSPFPIPQNGLPATFRRHSL.

Residues 4-24 (IWFLVVPILILCLLLVRVIVS) form a helical membrane-spanning segment. A heme-binding site is contributed by cysteine 415.

It belongs to the cytochrome P450 family. Requires heme as cofactor. As to expression, mainly expressed in flowers. Lower expression in siliques, rosette leaves, roots and stems. Not expressed in dry seeds. Expressed in silique envelopes, but not in embryo or endosperm during the seed development.

It localises to the membrane. It carries out the reaction 2-cis-(+)-abscisate + reduced [NADPH--hemoprotein reductase] + O2 = (+)-8'-hydroxyabscisate + oxidized [NADPH--hemoprotein reductase] + H2O + H(+). It functions in the pathway plant hormone degradation; abscisic acid degradation. Functionally, involved in the oxidative degradation of abscisic acid, but not in the isomerization of the produced 8'-hydroxyabscisic acid (8'-OH-ABA) to (-)-phaseic acid (PA). The chain is Abscisic acid 8'-hydroxylase 4 (CYP707A4) from Arabidopsis thaliana (Mouse-ear cress).